The chain runs to 351 residues: Histidinol-phosphate aminotransferase (351 aa).

Lysine 209 carries the post-translational modification N6-(pyridoxal phosphate)lysine.

The protein belongs to the class-II pyridoxal-phosphate-dependent aminotransferase family. Histidinol-phosphate aminotransferase subfamily. In terms of assembly, homodimer. Pyridoxal 5'-phosphate is required as a cofactor.

The enzyme catalyses L-histidinol phosphate + 2-oxoglutarate = 3-(imidazol-4-yl)-2-oxopropyl phosphate + L-glutamate. It participates in amino-acid biosynthesis; L-histidine biosynthesis; L-histidine from 5-phospho-alpha-D-ribose 1-diphosphate: step 7/9. In Chromohalobacter salexigens (strain ATCC BAA-138 / DSM 3043 / CIP 106854 / NCIMB 13768 / 1H11), this protein is Histidinol-phosphate aminotransferase.